The sequence spans 144 residues: Large ribosomal subunit protein uL13 (144 aa).

This sequence belongs to the universal ribosomal protein uL13 family. As to quaternary structure, part of the 50S ribosomal subunit.

In terms of biological role, this protein is one of the early assembly proteins of the 50S ribosomal subunit, although it is not seen to bind rRNA by itself. It is important during the early stages of 50S assembly. The sequence is that of Large ribosomal subunit protein uL13 from Heliobacterium modesticaldum (strain ATCC 51547 / Ice1).